The chain runs to 1417 residues: Cytoadherence-linked asexual protein 3.1 (1417 aa).

The first 24 residues, 1–24, serve as a signal peptide directing secretion; it reads MVSFFKTPIFILIIFLYLNEKVIC. Disulfide bonds link Cys-333-Cys-361, Cys-407-Cys-413, Cys-517-Cys-545, and Cys-521-Cys-542. A helical membrane pass occupies residues 1204–1224; the sequence is LANGFMYAFCFFAISQMYAYF. The tract at residues 1383-1417 is disordered; sequence TYIDTEKMNEADSADSDDEKDSDTPDDELMISRFH. Positions 1394–1411 are enriched in acidic residues; it reads DSADSDDEKDSDTPDDEL.

In terms of assembly, self-associates. Component of the RhopH complex. RhopH complex is at least composed of CLAG3.1/CLAG3.2, RhopH2 and RhopH3 with a 1:1:1 subunit stoichiometry. CLAG3.1/CLAG3.2 mediates subunit association through independent contacts with RhopH2 and RhopH3, which do not directly interact with one another. Interacts with RhopH2. Interacts with RhopH3.

The protein resides in the host cell membrane. It is found in the host cytoplasm. Its subcellular location is the cytoplasmic vesicle. It localises to the secretory vesicle. The protein localises to the rhoptry. Functionally, participates in the formation of new permeability pathways in Plasmodium-infected erythrocytes enabling the uptake of nutrients from the blood plasma. This chain is Cytoadherence-linked asexual protein 3.1, found in Plasmodium falciparum.